The following is a 606-amino-acid chain: MVRGARQSQQPRSRLAPRLSGTVEKPPRKRKSRTEFTLKETMSSGGAEDDIPQGERKTVTDFCYLLDKSKQLFNGLRDLPQYGQKQWQSYFGRTFDVYTKLWKFQQQHRQVLDNRYGLKRWQIGEIASKIGQLYYHYYLRTSETSYLNEAFSFYSAIRQRSYYSQVNKEDRPELVVKKLRYYARFIVVCLLLNKMDVVKDLVKELSDEIEDYTHRFNTEDQVEWNLVLQEVAAFIEADPVMVLNDDNTIVITSNRLAETGAPLLEQGMIVGQLSLADALIIGNCNNQVKFSELTVDMFRMLQALEREPMNLASQMNKPGIQEPADKPTRRENPHKYLLYKPTFSQLYTFLAASFKELPANSVLLIYLSATGVFPTGRSDGEGPYDFGGVLTNSNRDIINGDAIHKRNQSHKEMHCLHPGDLYPFTRKPLFIVVDSSNSVAYKNFTNLFGQPLVCLLSPTAYPKALQDQSQRGSLFTLFLNNPLMAFLFVSGLSSMRRGLWEKCQEYLRKINRDIAQLLTHSRSIDQAFLQFFGDEFLRLLLTRFVFCSATMRMHKAFRETRNYPESYPQLPRDETVENPHLQKHILELASILDVRNIFFENSMDDY.

The span at 1 to 12 (MVRGARQSQQPR) shows a compositional bias: polar residues. Residues 1-53 (MVRGARQSQQPRSRLAPRLSGTVEKPPRKRKSRTEFTLKETMSSGGAEDDIPQ) form a disordered region. A necessary to inhibit MRTFA-induced SRF transcriptional activity region spans residues 1 to 212 (MVRGARQSQQ…KELSDEIEDY (212 aa)). Tyr64 carries the phosphotyrosine modification. The interval 71 to 173 (QLFNGLRDLP…SQVNKEDRPE (103 aa)) is required for interaction with MRTFA. A helical transmembrane segment spans residues 472–492 (GSLFTLFLNNPLMAFLFVSGL).

This sequence belongs to the SCAI family. Interacts with DIAPH1. Forms a nuclear ternary complex with MRTFA and SRF. As to expression, expressed in most tissues tested with higher expression levels in brain, spleen and thymus.

It is found in the membrane. Its subcellular location is the nucleus. It localises to the cytoplasm. Tumor suppressor which functions to suppress MRTFA-induced SRF transcriptional activity. May function in the RHOA-DIAPH1 signal transduction pathway and regulate cell migration through transcriptional regulation of ITGB1. The sequence is that of Protein SCAI (Scai) from Mus musculus (Mouse).